Reading from the N-terminus, the 617-residue chain is Arrestin domain-containing protein B (617 aa).

One can recognise a C2 domain in the interval 1-109 (MDNRGLRLFI…ATFGQTDKWL (109 aa)). Residues aspartate 20, aspartate 27, aspartate 76, aspartate 78, and aspartate 84 each coordinate Ca(2+).

This sequence belongs to the arrestin family. It depends on Ca(2+) as a cofactor.

The chain is Arrestin domain-containing protein B (adcB) from Dictyostelium discoideum (Social amoeba).